A 487-amino-acid chain; its full sequence is L-tartrate/succinate antiporter (487 aa).

The next 14 membrane-spanning stretches (helical) occupy residues 10-30, 33-53, 54-74, 93-113, 137-157, 189-209, 236-256, 292-312, 313-333, 340-360, 370-390, 393-413, 418-438, and 465-485; these read YLAP…AGLE, TWLY…EPVP, GAVV…WLLF, WAVS…FMFG, TLFL…VTPS, IGSY…AIFL, FLGM…LAYV, LIVG…AAMV, GYSV…DIVS, VFFW…TGFI, SLSG…FYLL, FFAS…AAAL, IPLP…SILT, and IFGL…MPVV.

Belongs to the SLC13A/DASS transporter (TC 2.A.47) family. DIT1 subfamily.

The protein resides in the cell inner membrane. The enzyme catalyses (2R,3R)-tartrate(out) + succinate(in) = (2R,3R)-tartrate(in) + succinate(out). In terms of biological role, catalyzes the uptake of tartrate in exchange for intracellular succinate. Essential for anaerobic L-tartrate fermentation. This is L-tartrate/succinate antiporter (ttdT) from Shigella sonnei (strain Ss046).